The chain runs to 186 residues: Ribosome-recycling factor (186 aa).

Belongs to the RRF family.

The protein localises to the cytoplasm. In terms of biological role, responsible for the release of ribosomes from messenger RNA at the termination of protein biosynthesis. May increase the efficiency of translation by recycling ribosomes from one round of translation to another. The sequence is that of Ribosome-recycling factor from Cupriavidus pinatubonensis (strain JMP 134 / LMG 1197) (Cupriavidus necator (strain JMP 134)).